A 223-amino-acid chain; its full sequence is Germin-like protein 1-3 (223 aa).

An N-terminal signal peptide occupies residues Met1–Ala22. The cysteines at positions 32 and 50 are disulfide-linked. Residue Asn55 is glycosylated (N-linked (GlcNAc...) asparagine). A Cupin type-1 domain is found at Asp64–Glu212. Residues His112, His114, Glu119, and His158 each contribute to the Mn(2+) site.

Belongs to the germin family. As to quaternary structure, oligomer (believed to be a pentamer but probably hexamer).

It localises to the secreted. It is found in the extracellular space. The protein localises to the apoplast. Functionally, may play a role in plant defense. Probably has no oxalate oxidase activity even if the active site is conserved. This is Germin-like protein 1-3 (GER8) from Oryza sativa subsp. japonica (Rice).